We begin with the raw amino-acid sequence, 556 residues long: Formate--tetrahydrofolate ligase (556 aa).

65–72 (TPAGEGKS) is an ATP binding site.

Belongs to the formate--tetrahydrofolate ligase family.

The enzyme catalyses (6S)-5,6,7,8-tetrahydrofolate + formate + ATP = (6R)-10-formyltetrahydrofolate + ADP + phosphate. The protein operates within one-carbon metabolism; tetrahydrofolate interconversion. This chain is Formate--tetrahydrofolate ligase, found in Streptococcus uberis (strain ATCC BAA-854 / 0140J).